Here is a 605-residue protein sequence, read N- to C-terminus: Dynein axonemal intermediate chain 2 (605 aa).

WD repeat units follow at residues 150–203, 208–246, 253–294, 301–347, 355–393, 399–437, and 443–481; these read KTIN…IWDL, KPEL…CWDT, AELS…WWDI, TEVV…SCNR, KIVC…IWSE, SIMW…IWDF, and DPTL…LLEV. The interval 568 to 605 is disordered; the sequence is IKLTPVPQQPSPEEDQVVEEGEEAAGEEGDEEVEEDLA. Over residues 579-605 the composition is skewed to acidic residues; sequence PEEDQVVEEGEEAAGEEGDEEVEEDLA.

Belongs to the dynein intermediate chain family. Consists of at least two heavy chains and a number of intermediate and light chains. Interacts with DNAAF2. Interacts with DNAAF6/PIH1D3. Interacts with HEATR2; probably involved in outer arm dynein assembly. Interacts with CFAP53. As to expression, highly expressed in trachea and testis. Expressed in respiratory ciliated cells (at protein level).

It localises to the cytoplasm. The protein resides in the cytoskeleton. It is found in the cilium axoneme. Its subcellular location is the dynein axonemal particle. Its function is as follows. Part of the dynein complex of respiratory cilia. The sequence is that of Dynein axonemal intermediate chain 2 from Homo sapiens (Human).